The following is a 97-amino-acid chain: YcgL domain-containing protein PP_4590 (97 aa).

The YcgL domain occupies 3 to 87 (RICSIYKSPR…LEDEYIEHLP (85 aa)).

This Pseudomonas putida (strain ATCC 47054 / DSM 6125 / CFBP 8728 / NCIMB 11950 / KT2440) protein is YcgL domain-containing protein PP_4590.